The following is a 106-amino-acid chain: uncharacterized protein (106 aa).

A run of 2 helical transmembrane segments spans residues 53–70 and 74–93; these read LLLL…LDII and ILGL…WTLI.

The protein localises to the cell membrane. This is an uncharacterized protein from Bacillus subtilis (strain 168).